A 269-amino-acid polypeptide reads, in one-letter code: 4-hydroxy-tetrahydrodipicolinate reductase (269 aa).

NAD(+)-binding positions include Gly12–Met17, Gly102–Thr104, and Ser126–Met129. His159 acts as the Proton donor/acceptor in catalysis. Position 160 (His160) interacts with (S)-2,3,4,5-tetrahydrodipicolinate. Lys163 functions as the Proton donor in the catalytic mechanism. A (S)-2,3,4,5-tetrahydrodipicolinate-binding site is contributed by Gly169–Thr170.

It belongs to the DapB family.

Its subcellular location is the cytoplasm. It carries out the reaction (S)-2,3,4,5-tetrahydrodipicolinate + NAD(+) + H2O = (2S,4S)-4-hydroxy-2,3,4,5-tetrahydrodipicolinate + NADH + H(+). The catalysed reaction is (S)-2,3,4,5-tetrahydrodipicolinate + NADP(+) + H2O = (2S,4S)-4-hydroxy-2,3,4,5-tetrahydrodipicolinate + NADPH + H(+). The protein operates within amino-acid biosynthesis; L-lysine biosynthesis via DAP pathway; (S)-tetrahydrodipicolinate from L-aspartate: step 4/4. In terms of biological role, catalyzes the conversion of 4-hydroxy-tetrahydrodipicolinate (HTPA) to tetrahydrodipicolinate. This is 4-hydroxy-tetrahydrodipicolinate reductase from Leptospira borgpetersenii serovar Hardjo-bovis (strain JB197).